The sequence spans 134 residues: MVIFMTEEQKRKLTGKMKRMLRAKAHHLEPVVWVGKEGSEKVIKEVDRQLKERGLIKVKVRKAALLYEDKYEIAEKLAKACDAEVVSVVGHVITLFRPREGWKKYLAKKPKKKVKKDEKIIELFEKFKKKAVKE.

Positions 11-108 (RKLTGKMKRM…REGWKKYLAK (98 aa)) constitute a CRM domain.

This Methanocaldococcus jannaschii (strain ATCC 43067 / DSM 2661 / JAL-1 / JCM 10045 / NBRC 100440) (Methanococcus jannaschii) protein is Probable RNA-binding protein MJ0652.